A 206-amino-acid polypeptide reads, in one-letter code: Large ribosomal subunit protein uL4 (206 aa).

Residues 63–93 (MYKQKGTGRARHHSARAPQFRGGGKAHGPVV) form a disordered region. The span at 64–77 (YKQKGTGRARHHSA) shows a compositional bias: basic residues.

The protein belongs to the universal ribosomal protein uL4 family. In terms of assembly, part of the 50S ribosomal subunit.

In terms of biological role, one of the primary rRNA binding proteins, this protein initially binds near the 5'-end of the 23S rRNA. It is important during the early stages of 50S assembly. It makes multiple contacts with different domains of the 23S rRNA in the assembled 50S subunit and ribosome. Forms part of the polypeptide exit tunnel. This chain is Large ribosomal subunit protein uL4, found in Sinorhizobium medicae (strain WSM419) (Ensifer medicae).